Consider the following 486-residue polypeptide: Glutamyl-tRNA(Gln) amidotransferase subunit A (486 aa).

Active-site charge relay system residues include Lys-76 and Ser-151. Catalysis depends on Ser-175, which acts as the Acyl-ester intermediate.

It belongs to the amidase family. GatA subfamily. Heterotrimer of A, B and C subunits.

It catalyses the reaction L-glutamyl-tRNA(Gln) + L-glutamine + ATP + H2O = L-glutaminyl-tRNA(Gln) + L-glutamate + ADP + phosphate + H(+). Functionally, allows the formation of correctly charged Gln-tRNA(Gln) through the transamidation of misacylated Glu-tRNA(Gln) in organisms which lack glutaminyl-tRNA synthetase. The reaction takes place in the presence of glutamine and ATP through an activated gamma-phospho-Glu-tRNA(Gln). The sequence is that of Glutamyl-tRNA(Gln) amidotransferase subunit A from Nitrosomonas europaea (strain ATCC 19718 / CIP 103999 / KCTC 2705 / NBRC 14298).